Reading from the N-terminus, the 280-residue chain is Probable protein VP2 (280 aa).

Disordered stretches follow at residues 46 to 167 (LGAG…FFTS) and 200 to 280 (AQLS…TYSN). The span at 65–81 (PEGPGGPPQHAPPNPPP) shows a compositional bias: pro residues. A compositionally biased stretch (gly residues) spans 90–100 (RGGGAGGAGDG). A compositionally biased stretch (acidic residues) spans 106–117 (DAAEEYGPEDLD). Over residues 227–251 (AKTRRRVKKKPLSSKNKHTKKKKRS) the composition is skewed to basic residues. Low complexity predominate over residues 252–266 (YSSSSPSSKDNTSES).

Phosphorylated at C-terminal serines.

This chain is Probable protein VP2, found in Homo sapiens (Human).